The chain runs to 105 residues: Large ribosomal subunit protein eL42 (105 aa).

The interval Lys-23 to Ala-61 is disordered.

This sequence belongs to the eukaryotic ribosomal protein eL42 family.

The polypeptide is Large ribosomal subunit protein eL42 (Caenorhabditis elegans).